An 83-amino-acid polypeptide reads, in one-letter code: Lipolysis-activating peptide 1-alpha chain (83 aa).

An N-terminal signal peptide occupies residues 1 to 21 (MNIILFYFMPILISLPGLLAS). The 62-residue stretch at 22 to 83 (GTYPNDVYGL…LFWDVYKEHC (62 aa)) folds into the LCN-type CS-alpha/beta domain. 3 disulfides stabilise this stretch: C35–C58, C44–C63, and C48–C65.

This sequence belongs to the long (3 C-C) scorpion toxin superfamily. Monomer (edited version) and heterodimer (non-edited version) of this alpha chain and a beta chain (AC P0CI43). In terms of tissue distribution, expressed by the venom gland.

It is found in the secreted. Functionally, the heterodimer non-edited LVP1 induces lipolysis in rat adipocytes. Induction of lipolysis by LVP1 appears to be mediated through the beta-2 adrenergic receptor pathway (ADRB2). Its function is as follows. The edited BmKBTx-like, similar to beta-toxins, may modulate voltage-gated sodium channels (Nav) and may block voltage-gated potassium channels (Kv). The polypeptide is Lipolysis-activating peptide 1-alpha chain (Lychas mucronatus (Chinese swimming scorpion)).